The chain runs to 494 residues: Cytochrome P450 2A11 (494 aa).

An N6-acetyllysine modification is found at K379. C439 is a heme binding site.

It belongs to the cytochrome P450 family. Heme is required as a cofactor. As to expression, expressed in liver and lung as well as in nasal tissues.

The protein resides in the endoplasmic reticulum membrane. It localises to the microsome membrane. The enzyme catalyses an organic molecule + reduced [NADPH--hemoprotein reductase] + O2 = an alcohol + oxidized [NADPH--hemoprotein reductase] + H2O + H(+). Functionally, catalyzes the oxygenation of a variety of substrates, including ethanol and procarcinogens such as N-nitrosodiethylamine and phenacetin. Has no or little activity as a coumarin 7-hydroxylase and in the formation of androstenedione from testosterone. The chain is Cytochrome P450 2A11 (CYP2A11) from Oryctolagus cuniculus (Rabbit).